A 505-amino-acid polypeptide reads, in one-letter code: ATP synthase subunit alpha (505 aa).

170–177 (GDRQTGKT) contributes to the ATP binding site.

It belongs to the ATPase alpha/beta chains family. As to quaternary structure, F-type ATPases have 2 components, CF(1) - the catalytic core - and CF(0) - the membrane proton channel. CF(1) has five subunits: alpha(3), beta(3), gamma(1), delta(1), epsilon(1). CF(0) has four main subunits: a(1), b(1), b'(1) and c(9-12).

It localises to the cellular thylakoid membrane. It catalyses the reaction ATP + H2O + 4 H(+)(in) = ADP + phosphate + 5 H(+)(out). Produces ATP from ADP in the presence of a proton gradient across the membrane. The alpha chain is a regulatory subunit. The protein is ATP synthase subunit alpha of Synechococcus elongatus (strain ATCC 33912 / PCC 7942 / FACHB-805) (Anacystis nidulans R2).